The sequence spans 423 residues: Glutamyl-tRNA(Gln) amidotransferase subunit A (423 aa).

The disordered stretch occupies residues 1 to 20 (MSHNAFITEETIEPTDDGPL). The segment covering 10 to 19 (ETIEPTDDGP) has biased composition (acidic residues). Active-site charge relay system residues include Lys28 and Ser103. A disordered region spans residues 75–108 (EFGMGTTTETSAFGPTENPAAEGRVPGGSSGGSA). The active-site Acyl-ester intermediate is Ser127. The tract at residues 183–206 (DERDGTTREPPAGQPTYADAADGD) is disordered.

It belongs to the amidase family. GatA subfamily. As to quaternary structure, heterotrimer of A, B and C subunits.

The catalysed reaction is L-glutamyl-tRNA(Gln) + L-glutamine + ATP + H2O = L-glutaminyl-tRNA(Gln) + L-glutamate + ADP + phosphate + H(+). Allows the formation of correctly charged Gln-tRNA(Gln) through the transamidation of misacylated Glu-tRNA(Gln) in organisms which lack glutaminyl-tRNA synthetase. The reaction takes place in the presence of glutamine and ATP through an activated gamma-phospho-Glu-tRNA(Gln). This Natronomonas pharaonis (strain ATCC 35678 / DSM 2160 / CIP 103997 / JCM 8858 / NBRC 14720 / NCIMB 2260 / Gabara) (Halobacterium pharaonis) protein is Glutamyl-tRNA(Gln) amidotransferase subunit A.